The chain runs to 248 residues: Ribosomal RNA small subunit methyltransferase J (248 aa).

S-adenosyl-L-methionine is bound by residues 98–99 (RD), 114–115 (ER), 150–151 (SS), and aspartate 168.

This sequence belongs to the methyltransferase superfamily. RsmJ family.

The protein resides in the cytoplasm. The catalysed reaction is guanosine(1516) in 16S rRNA + S-adenosyl-L-methionine = N(2)-methylguanosine(1516) in 16S rRNA + S-adenosyl-L-homocysteine + H(+). In terms of biological role, specifically methylates the guanosine in position 1516 of 16S rRNA. This chain is Ribosomal RNA small subunit methyltransferase J, found in Shewanella baltica (strain OS185).